The sequence spans 389 residues: 23S rRNA (uracil(747)-C(5))-methyltransferase RlmC (389 aa).

4 residues coordinate [4Fe-4S] cluster: C12, C20, C23, and C99. S-adenosyl-L-methionine contacts are provided by Q224, F253, E274, and N321. The active-site Nucleophile is the C348.

It belongs to the class I-like SAM-binding methyltransferase superfamily. RNA M5U methyltransferase family. RlmC subfamily.

It catalyses the reaction uridine(747) in 23S rRNA + S-adenosyl-L-methionine = 5-methyluridine(747) in 23S rRNA + S-adenosyl-L-homocysteine + H(+). Functionally, catalyzes the formation of 5-methyl-uridine at position 747 (m5U747) in 23S rRNA. The polypeptide is 23S rRNA (uracil(747)-C(5))-methyltransferase RlmC (Shewanella putrefaciens (strain CN-32 / ATCC BAA-453)).